The following is a 304-amino-acid chain: Olfactory receptor 4K13 (304 aa).

Over 1–25 the chain is Extracellular; the sequence is MERANHSVVSEFILLGLSKSQNLQI. A glycan (N-linked (GlcNAc...) asparagine) is linked at Asn-5. A helical membrane pass occupies residues 26–49; sequence LFFLGFSVVFVGIVLGNLLILVTV. Residues 50-57 are Cytoplasmic-facing; the sequence is TFDSLLHT. Residues 58–79 traverse the membrane as a helical segment; it reads PMYFLLSNLSCIDMILASFATP. The Extracellular portion of the chain corresponds to 80-100; the sequence is KMIVDFLRERKTISWWGCYSQ. The cysteines at positions 97 and 189 are disulfide-linked. Residues 101 to 120 form a helical membrane-spanning segment; the sequence is MFFMHLLGGSEMMLLVAMAI. The Cytoplasmic segment spans residues 121–139; it reads DRYVAICKPLHYMTIMSPR. A helical membrane pass occupies residues 140-158; sequence VLTGLLLSSYAVGFVHSSS. Residues 159–195 are Extracellular-facing; sequence QMAFMLTLPFCGPNVIDSFFCDLPLVIKLACKDTYIL. A helical transmembrane segment spans residues 196 to 219; sequence QLLVIADSGLLSLVCFLLLLVSYG. Over 220 to 235 the chain is Cytoplasmic; sequence VIIFSVRYRAASRSSK. Residues 236-258 form a helical membrane-spanning segment; the sequence is AFSTLSAHITVVTLFFAPCVFIY. At 259–269 the chain is on the extracellular side; sequence VWPFSRYSVDK. The helical transmembrane segment at 270–289 threads the bilayer; that stretch reads ILSVFYTIFTPLLNPIIYTL. Over 290–304 the chain is Cytoplasmic; the sequence is RNQEVKAAIKKRLCI.

This sequence belongs to the G-protein coupled receptor 1 family.

The protein localises to the cell membrane. In terms of biological role, odorant receptor. The polypeptide is Olfactory receptor 4K13 (OR4K13) (Homo sapiens (Human)).